Here is a 662-residue protein sequence, read N- to C-terminus: DNA topoisomerase 4 subunit B (662 aa).

ATP contacts are provided by residues tyrosine 20, asparagine 60, aspartate 87, glycine 129–isoleucine 135, and lysine 359. The 115-residue stretch at threonine 439–proline 553 folds into the Toprim domain. Mg(2+) contacts are provided by glutamate 445, aspartate 518, and aspartate 520.

It belongs to the type II topoisomerase family. ParE type 1 subfamily. As to quaternary structure, heterotetramer composed of ParC and ParE. Requires Mg(2+) as cofactor. It depends on Mn(2+) as a cofactor. Ca(2+) is required as a cofactor.

The enzyme catalyses ATP-dependent breakage, passage and rejoining of double-stranded DNA.. Its function is as follows. Topoisomerase IV is essential for chromosome segregation. It relaxes supercoiled DNA. Performs the decatenation events required during the replication of a circular DNA molecule. The polypeptide is DNA topoisomerase 4 subunit B (Rickettsia conorii (strain ATCC VR-613 / Malish 7)).